The primary structure comprises 125 residues: Large ribosomal subunit protein bL12 (125 aa).

Belongs to the bacterial ribosomal protein bL12 family. Homodimer. Part of the ribosomal stalk of the 50S ribosomal subunit. Forms a multimeric L10(L12)X complex, where L10 forms an elongated spine to which 2 to 4 L12 dimers bind in a sequential fashion. Binds GTP-bound translation factors.

Its function is as follows. Forms part of the ribosomal stalk which helps the ribosome interact with GTP-bound translation factors. Is thus essential for accurate translation. The sequence is that of Large ribosomal subunit protein bL12 from Cereibacter sphaeroides (strain ATCC 17023 / DSM 158 / JCM 6121 / CCUG 31486 / LMG 2827 / NBRC 12203 / NCIMB 8253 / ATH 2.4.1.) (Rhodobacter sphaeroides).